The following is a 388-amino-acid chain: Chorismate synthase (388 aa).

NADP(+)-binding residues include arginine 39 and arginine 45. FMN-binding positions include 130–132 (RSS), 251–252 (NA), alanine 296, 311–315 (KPIPT), and arginine 337.

This sequence belongs to the chorismate synthase family. In terms of assembly, homotetramer. FMNH2 serves as cofactor.

It catalyses the reaction 5-O-(1-carboxyvinyl)-3-phosphoshikimate = chorismate + phosphate. It functions in the pathway metabolic intermediate biosynthesis; chorismate biosynthesis; chorismate from D-erythrose 4-phosphate and phosphoenolpyruvate: step 7/7. In terms of biological role, catalyzes the anti-1,4-elimination of the C-3 phosphate and the C-6 proR hydrogen from 5-enolpyruvylshikimate-3-phosphate (EPSP) to yield chorismate, which is the branch point compound that serves as the starting substrate for the three terminal pathways of aromatic amino acid biosynthesis. This reaction introduces a second double bond into the aromatic ring system. This Streptococcus equi subsp. equi (strain 4047) protein is Chorismate synthase.